The chain runs to 375 residues: Histidine biosynthesis bifunctional protein HisB (375 aa).

The histidinol-phosphatase stretch occupies residues 1-168 (MTPIVFIDRD…GIAHTLADAP (168 aa)). Aspartate 8 acts as the Nucleophile in catalysis. Mg(2+)-binding residues include aspartate 8, aspartate 10, and aspartate 128. The Proton donor role is filled by aspartate 10. The interval 169 to 375 (RRAVVQRHTK…HVLPSTKGAL (207 aa)) is imidazoleglycerol-phosphate dehydratase.

In the N-terminal section; belongs to the histidinol-phosphatase family. It in the C-terminal section; belongs to the imidazoleglycerol-phosphate dehydratase family. Mg(2+) serves as cofactor.

It is found in the cytoplasm. It carries out the reaction D-erythro-1-(imidazol-4-yl)glycerol 3-phosphate = 3-(imidazol-4-yl)-2-oxopropyl phosphate + H2O. The catalysed reaction is L-histidinol phosphate + H2O = L-histidinol + phosphate. Its pathway is amino-acid biosynthesis; L-histidine biosynthesis; L-histidine from 5-phospho-alpha-D-ribose 1-diphosphate: step 6/9. It functions in the pathway amino-acid biosynthesis; L-histidine biosynthesis; L-histidine from 5-phospho-alpha-D-ribose 1-diphosphate: step 8/9. In Xylella fastidiosa (strain Temecula1 / ATCC 700964), this protein is Histidine biosynthesis bifunctional protein HisB.